Reading from the N-terminus, the 775-residue chain is Isopimaradiene synthase (775 aa).

Residues 1-36 constitute a chloroplast transit peptide; it reads MFSSSLKLKTNPLMDNKIHRSSSDRDFRGSTISSVK. Residues D525, D529, N669, Q672, and E677 each contribute to the Mg(2+) site. A DDXXD motif motif is present at residues 525 to 529; that stretch reads DDFFD.

Belongs to the terpene synthase family. Mg(2+) is required as a cofactor. Ubiquitous expression in roots, stems, leaves and flowers.

It is found in the plastid. The protein localises to the chloroplast. The catalysed reaction is (+)-copalyl diphosphate = isopimara-8(14),15-diene + diphosphate. It functions in the pathway secondary metabolite biosynthesis; terpenoid biosynthesis. Its function is as follows. Involved in the biosynthesis of ent-kaurene diterpenoids natural products such as oridonin, miltiradiene, eriocalyxin B and nezukol, known to exhibit antitumor, anti-inflammatory and antibacterial activities. Catalyzes the conversion of (+)-copalyl diphosphate ((+)-CPP) to isopimaradiene. This is Isopimaradiene synthase from Isodon rubescens (Rabdosia rubescens).